The following is a 112-amino-acid chain: MKKVEAIIRPFKLDEVKIALVNAGIVGMTVSEVRGFGRQKGQTERYRGSEYTVEFLQKLKVEIVVEDNQVDMVVDKIIAAARTGEIGDGKIFISPVEQVVRIRTGEKNTEAV.

At serine 49 the chain carries Phosphoserine. Tyrosine 51 bears the O-UMP-tyrosine mark.

The protein belongs to the P(II) protein family. As to quaternary structure, homotrimer. Post-translationally, phosphorylation dependent on the nitrogen source and spectral light quality.

Its function is as follows. P-II indirectly controls the transcription of the GS gene (glnA). P-II prevents NR-II-catalyzed conversion of NR-I to NR-I-phosphate, the transcriptional activator of glnA. When P-II is phosphorylated, these events are reversed. In nitrogen-limiting conditions, when the ratio of Gln to 2-ketoglutarate decreases, P-II is phosphorylated which allows the deadenylation of glutamine synthetase (GS), thus activating the enzyme. In Microchaete diplosiphon (Fremyella diplosiphon), this protein is Nitrogen regulatory protein P-II (glnB).